The chain runs to 178 residues: MLEGIVRESIGRKAAKALKRDGYLIANIYGKGLENINAAFKVNEFIKEVRKKTTLIFDVKVGSQTLSVVVVDYQKDPVTAELKHVDLKVAQKGVISKYMVPVKITGTAIGLKNKGVLIQSKRRLKVKCAAENLPNFFELDVSKLDVGDALLVRDIVVPAGVTMIDADRVAVVGVEKAR.

The protein belongs to the bacterial ribosomal protein bL25 family. CTC subfamily. Part of the 50S ribosomal subunit; part of the 5S rRNA/L5/L18/L25 subcomplex. Contacts the 5S rRNA. Binds to the 5S rRNA independently of L5 and L18.

Its function is as follows. This is one of the proteins that binds to the 5S RNA in the ribosome where it forms part of the central protuberance. This chain is Large ribosomal subunit protein bL25, found in Campylobacter jejuni subsp. jejuni serotype O:6 (strain 81116 / NCTC 11828).